A 292-amino-acid chain; its full sequence is Phosphotriesterase homology protein (292 aa).

The Zn(2+) site is built by His12, His14, and Glu125. 148 to 149 (HN) contributes to the beta-D-glucose binding site. Residue His158 coordinates Zn(2+). Positions 176, 178, and 181 each coordinate beta-D-glucose. Positions 186 and 243 each coordinate Zn(2+). The beta-D-glucose site is built by Asp280 and Arg284.

The protein belongs to the metallo-dependent hydrolases superfamily. Phosphotriesterase family. In terms of assembly, monomer. It depends on Zn(2+) as a cofactor.

Its activity is regulated as follows. Activity is higher in the enzyme containing Mn(2+) than that containing Zn(2+). Functionally, catalyzes the hydrolysis of phosphorylated glyceryl acetates in which the presence of a phosphate group is required for the enzymatic hydrolysis. Hydrolyzes a dibutyl glycerol derivative suggesting it acts on phosphoglycerol substrates with a butyrate leaving group. Also active with aromatic acetates and propionates. No activity with various sugar phosphates, with various nitrophenylphosphate or nitrophenylphosphonate derivatives, or with phosphorylated or non-phosphorylated sugar lactones tested. Does not hydrolyze non-phosphorylated carboxyesters with long chain leaving groups. No general esterase, aminopeptidase, sulfatase, phosphatase, carbonic anhydrase, phosphodiesterase, and phosphotriesterase activities detected when tested with the following non-specific substrates: p-nitrophenyl acetate, L-alanine nitroanilide, p-nitrophenyl sulfate, bis(p-nitrophenyl) phosphate, paraoxon, and p-nitrophenyl phosphate. In Escherichia coli (strain K12), this protein is Phosphotriesterase homology protein.